A 229-amino-acid chain; its full sequence is Thiamine import ATP-binding protein ThiQ (229 aa).

In terms of domain architecture, ABC transporter spans 2 to 229; sequence LHLENIRVRQ…NNAEPLRPWM (228 aa). An ATP-binding site is contributed by 32-39; it reads GASGSGKS.

The protein belongs to the ABC transporter superfamily. Thiamine importer (TC 3.A.1.19.1) family. The complex is composed of two ATP-binding proteins (ThiQ), two transmembrane proteins (ThiP) and a solute-binding protein (ThiB).

It localises to the cell inner membrane. It carries out the reaction thiamine(out) + ATP + H2O = thiamine(in) + ADP + phosphate + H(+). In terms of biological role, part of the ABC transporter complex ThiBPQ involved in thiamine import. Responsible for energy coupling to the transport system. In Jannaschia sp. (strain CCS1), this protein is Thiamine import ATP-binding protein ThiQ.